A 271-amino-acid chain; its full sequence is Urease accessory protein UreD (271 aa).

It belongs to the UreD family. As to quaternary structure, ureD, UreF and UreG form a complex that acts as a GTP-hydrolysis-dependent molecular chaperone, activating the urease apoprotein by helping to assemble the nickel containing metallocenter of UreC. The UreE protein probably delivers the nickel.

The protein localises to the cytoplasm. Required for maturation of urease via the functional incorporation of the urease nickel metallocenter. This chain is Urease accessory protein UreD, found in Actinomyces naeslundii.